A 203-amino-acid polypeptide reads, in one-letter code: Glycerol-3-phosphate acyltransferase (203 aa).

Residues 1–3 (MSA) are Periplasmic-facing. Residues 4 to 24 (IAPGMILFAYLCGSISSAILV) form a helical membrane-spanning segment. The Cytoplasmic segment spans residues 25 to 52 (CRIAGLPDPRESGSGNPGATNVLRIGGK). A helical transmembrane segment spans residues 53–73 (GAAVAVLIFDILKGMLPVWGA). Over 74 to 80 (YALGVTP) the chain is Periplasmic. Residues 81 to 101 (FWLGLIAIAACLGHIWPVFFG) form a helical membrane-spanning segment. Residues 102 to 111 (FKGGKGVATA) lie on the Cytoplasmic side of the membrane. A helical transmembrane segment spans residues 112–132 (FGAIAPIGWDLTGVMAGTWLL). Residues 133 to 137 (TVLLS) lie on the Periplasmic side of the membrane. The helical transmembrane segment at 138-158 (GYSSLGAIVSALIAPFYVWWF) threads the bilayer. Topologically, residues 159–203 (KPQFTFPVSMLSCLILLRHHDNIQRLWRRQETKIWTKLKKKRQKD) are cytoplasmic.

The protein belongs to the PlsY family. As to quaternary structure, probably interacts with PlsX.

The protein resides in the cell inner membrane. It catalyses the reaction sn-glycerol 3-phosphate + an acyl-CoA = a 1-acyl-sn-glycero-3-phosphate + CoA. The enzyme catalyses a fatty acyl-[ACP] + sn-glycerol 3-phosphate = a 1-acyl-sn-glycero-3-phosphate + holo-[ACP]. It functions in the pathway lipid metabolism; phospholipid metabolism. Its function is as follows. Catalyzes the transfer of an acyl group from acyl-ACP to glycerol-3-phosphate (G3P) to form lysophosphatidic acid (LPA). This enzyme can also utilize acyl-CoA as fatty acyl donor, but not acyl-PO(4). This chain is Glycerol-3-phosphate acyltransferase, found in Salmonella agona (strain SL483).